Here is a 620-residue protein sequence, read N- to C-terminus: Dihydroxy-acid dehydratase (620 aa).

D81 contacts Mg(2+). Residue C122 coordinates [2Fe-2S] cluster. Mg(2+)-binding residues include D123 and K124. At K124 the chain carries N6-carboxylysine. Residue C195 coordinates [2Fe-2S] cluster. Residue E491 coordinates Mg(2+). The Proton acceptor role is filled by S517.

The protein belongs to the IlvD/Edd family. As to quaternary structure, homodimer. Requires [2Fe-2S] cluster as cofactor. Mg(2+) serves as cofactor.

The enzyme catalyses (2R)-2,3-dihydroxy-3-methylbutanoate = 3-methyl-2-oxobutanoate + H2O. The catalysed reaction is (2R,3R)-2,3-dihydroxy-3-methylpentanoate = (S)-3-methyl-2-oxopentanoate + H2O. It participates in amino-acid biosynthesis; L-isoleucine biosynthesis; L-isoleucine from 2-oxobutanoate: step 3/4. The protein operates within amino-acid biosynthesis; L-valine biosynthesis; L-valine from pyruvate: step 3/4. Its function is as follows. Functions in the biosynthesis of branched-chain amino acids. Catalyzes the dehydration of (2R,3R)-2,3-dihydroxy-3-methylpentanoate (2,3-dihydroxy-3-methylvalerate) into 2-oxo-3-methylpentanoate (2-oxo-3-methylvalerate) and of (2R)-2,3-dihydroxy-3-methylbutanoate (2,3-dihydroxyisovalerate) into 2-oxo-3-methylbutanoate (2-oxoisovalerate), the penultimate precursor to L-isoleucine and L-valine, respectively. The protein is Dihydroxy-acid dehydratase of Colwellia psychrerythraea (strain 34H / ATCC BAA-681) (Vibrio psychroerythus).